The following is a 653-amino-acid chain: uncharacterized protein (653 aa).

A run of 2 helical transmembrane segments spans residues 39 to 59 and 207 to 227; these read AMTT…LKLI and AVFV…AFTI. An HAMP domain is found at 225–277; sequence FTITKPIRELLTGVKNIASGDFHQRISLPFGGELGALIFNFNEMAERLEKYEQ. In terms of domain architecture, PAS spans 286-356; the sequence is EKAKLETLVS…PALNDIVRKN (71 aa). The Histidine kinase domain occupies 421–651; it reads NVSHELRTPL…CFFFDLIIAK (231 aa). Histidine 424 is modified (phosphohistidine; by autocatalysis).

The protein resides in the plastid. Its subcellular location is the chloroplast membrane. The enzyme catalyses ATP + protein L-histidine = ADP + protein N-phospho-L-histidine.. This is an uncharacterized protein from Pyropia yezoensis (Susabi-nori).